The primary structure comprises 858 residues: Phosphoenolpyruvate carboxylase (858 aa).

Active-site residues include His145 and Lys531.

Belongs to the PEPCase type 1 family. Mg(2+) serves as cofactor.

It carries out the reaction oxaloacetate + phosphate = phosphoenolpyruvate + hydrogencarbonate. Forms oxaloacetate, a four-carbon dicarboxylic acid source for the tricarboxylic acid cycle. The sequence is that of Phosphoenolpyruvate carboxylase from Thermus thermophilus (strain ATCC BAA-163 / DSM 7039 / HB27).